The sequence spans 295 residues: Aquaporin-9 (295 aa).

Residues 1 to 24 (MQPEGAEKGKSFKQRLVLKSSLAK) are Cytoplasmic-facing. A helical transmembrane segment spans residues 25–43 (ETLSEFLGTFILIVLGCGC). Residues 44–57 (VAQAILSRGRFGGV) lie on the Extracellular side of the membrane. A helical transmembrane segment spans residues 58–77 (ITINVGFSMAVAMAIYVAGG). Over 78–79 (VS) the chain is Cytoplasmic. Residues 80-92 (GGHINPAVSLAMC) constitute an intramembrane region (discontinuously helical). An NPA 1 motif is present at residues 84-86 (NPA). Over 93–98 (LFGRMK) the chain is Cytoplasmic. Residues 99–123 (WFKLPFYVGAQFLGAFVGAATVFGI) form a helical membrane-spanning segment. Residues 124–160 (YYDGLMSFAGGKLLIVGENATAHIFATYPAPYLSLAN) lie on the Extracellular side of the membrane. A helical transmembrane segment spans residues 161–178 (AFADQVVATMILLIIVFA). The Cytoplasmic portion of the chain corresponds to 179-190 (IFDSRNLGAPRG). The chain crosses the membrane as a helical span at residues 191–207 (LEPIAIGLLIIVIASSL). Residues 208–210 (GLN) are Extracellular-facing. The discontinuously helical intramembrane region spans 211-225 (SGCAMNPARDLSPRL). Positions 216–218 (NPA) match the NPA 2 motif. Over 226-243 (FTALAGWGFEVFRAGNNF) the chain is Extracellular. The helical transmembrane segment at 244-264 (WWIPVVGPLVGAVIGGLIYVL) threads the bilayer. The Cytoplasmic segment spans residues 265 to 295 (VIEIHHPEPDSVFKTEQSEDKPEKYELSVIM).

It belongs to the MIP/aquaporin (TC 1.A.8) family. In terms of assembly, homotetramer; each monomer provides an independent glycerol/water pore. As to expression, highly expressed in peripheral leukocytes. Also expressed in liver, lung, and spleen.

The protein localises to the cell membrane. Its subcellular location is the basolateral cell membrane. It carries out the reaction glycerol(in) = glycerol(out). The enzyme catalyses H2O(in) = H2O(out). It catalyses the reaction urea(in) = urea(out). The catalysed reaction is (S)-lactate(in) = (S)-lactate(out). It carries out the reaction NH4(+)(in) = NH4(+)(out). The enzyme catalyses uracil(in) = uracil(out). It catalyses the reaction adenine(out) = adenine(in). The catalysed reaction is 3-hydroxybutanoate(in) = 3-hydroxybutanoate(out). It carries out the reaction D-sorbitol(in) = D-sorbitol(out). The enzyme catalyses D-mannitol(in) = D-mannitol(out). It catalyses the reaction H2O2(out) = H2O2(in). The catalysed reaction is arsenite(in) = arsenite(out). It carries out the reaction selenite(in) = selenite(out). Its function is as follows. Aquaglyceroporins form homotetrameric transmembrane channels, with each monomer independently mediating glycerol and water transport across the plasma membrane along their osmotic gradient. AQP9 is the primary route for glycerol uptake in hepatocytes, supporting hepatic gluconeogenesis. It exhibits broad specificity and may transport various small, non-charged solutes, including carbamides, polyols, purines, and pyrimidines. AQP9 may also facilitate hepatic urea extrusion. Due to its permeability to lactate, AQP9 might participate in the astrocyte-to-neuron lactate shuttle, supplying neurons with energy. Additionally, AQP9 is permeable to arsenite, contributing to arsenic excretion by the liver and providing partial protection against arsenic toxicity. It is also permeable to H2O2 in vivo. Could also be permeable to ammonium. The polypeptide is Aquaporin-9 (Homo sapiens (Human)).